The following is a 617-amino-acid chain: Na(+)/H(+) antiporter NhaA 1 (617 aa).

The tract at residues 1 to 26 is disordered; it reads MTVTEPATQRGFPLLPSRLSRGSKAT. Residues 1-433 form a na(+)/H(+) antiporter NhaA region; that stretch reads MTVTEPATQR…GWAIFRITDW (433 aa). Transmembrane regions (helical) follow at residues 33 to 53, 75 to 95, 113 to 133, 141 to 161, 171 to 191, 198 to 218, 234 to 254, 304 to 324, 341 to 361, 378 to 398, and 411 to 431; these read AAALLLTFTVVAILWANSPWA, MTVKHVVNDALMTFFFFIVGL, AVPVVAAAAGLILPAVVFLAF, HAWGVVISTDTAFLVGALAII, LFLLTLAVVDDVGALIAIAVL, VAPLVVAVALLGALALVRYLP, IALYLAGIHPTLAGVAVALLI, VSPVVSFVILPLFALVNAGVL, GIVAGLVVGKFVGIAGATWLI, IAGGAALSGIGFTISLFIVDI, and IGVLAASVLAFALGWAIFRIT. The region spanning 434–617 is the Thioredoxin domain; that stretch reads LSPPEPVGLK…LIRALEAGRG (184 aa).

It in the N-terminal section; belongs to the NhaA Na(+)/H(+) (TC 2.A.33) antiporter family.

The protein resides in the cell membrane. The enzyme catalyses Na(+)(in) + 2 H(+)(out) = Na(+)(out) + 2 H(+)(in). In terms of biological role, na(+)/H(+) antiporter that extrudes sodium in exchange for external protons. This is Na(+)/H(+) antiporter NhaA 1 from Mycolicibacterium gilvum (strain PYR-GCK) (Mycobacterium gilvum (strain PYR-GCK)).